Consider the following 473-residue polypeptide: Ammonium transporter Rh type C (473 aa).

Residues 1-9 lie on the Cytoplasmic side of the membrane; it reads MLRNSNMRW. The chain crosses the membrane as a helical span at residues 10 to 30; that stretch reads RLPLICFVWEIAMIVLFGIFV. The Extracellular segment spans residues 31-61; that stretch reads RYNDEADPHWPIFMKHENITSDIENDFYFRY. An N-linked (GlcNAc...) asparagine glycan is attached at asparagine 48. The chain crosses the membrane as a helical span at residues 62 to 82; sequence PSFQDVHVMIFVGFGFLMTFL. Over 83–86 the chain is Cytoplasmic; the sequence is QRYG. The chain crosses the membrane as a helical span at residues 87 to 107; the sequence is FGSVAFNFLLAAFGIQWALLM. At 108–125 the chain is on the extracellular side; it reads QGWFHTFVNGKILIGVES. The chain crosses the membrane as a helical span at residues 126–145; sequence LINADFCVGSVCIAFGGVLG. At 146–151 the chain is on the cytoplasmic side; that stretch reads KVSPVQ. The chain crosses the membrane as a helical span at residues 152–171; sequence IMLMTLFQVTLFAVNEWILL. Residues 172 to 179 lie on the Extracellular side of the membrane; it reads NKLHVIDA. Residues 180 to 200 form a helical membrane-spanning segment; the sequence is GGSMTIHTFGAYFGLTVAWIL. Topologically, residues 201–219 are cytoplasmic; it reads SRPKLKQNNDKEGSTYISD. The helical transmembrane segment at 220-240 threads the bilayer; it reads LFSMIGTLFLWMYWPSFNSAI. Residues 241-251 are Extracellular-facing; the sequence is SYHGDAQHRAA. Residues 252 to 272 form a helical membrane-spanning segment; the sequence is INTYCSLAACVLTTVAISSVV. Residues 273–285 are Cytoplasmic-facing; sequence NKKGKLEMVHIQN. The helical transmembrane segment at 286-306 threads the bilayer; the sequence is ATLAGGVAVGTAAEMMLTPYG. Serine 307 is a topological domain (extracellular). Residues 308 to 328 form a helical membrane-spanning segment; that stretch reads LIVGFICGIVSTLGFTYLSPI. The Cytoplasmic segment spans residues 329–343; that stretch reads LSNKLRLHDTCGIHN. Residues 344–364 form a helical membrane-spanning segment; it reads LHAIPGLIGGIVGAVTAACAT. Topologically, residues 365–396 are extracellular; that stretch reads EGVYTAEGLKKMFHFEGEYADRTPSIQGIYQA. The helical transmembrane segment at 397 to 417 threads the bilayer; that stretch reads AGIGVSLAFGIVGGTVVGCIL. At 418-473 the chain is on the cytoplasmic side; that stretch reads KLPIWGDPSDENCFDDDVYWELREEDEEEHLGAANQYITHLPENFKLPDRTEISFK.

This sequence belongs to the ammonium transporter (TC 2.A.49) family. Rh subfamily. Homotrimer.

It is found in the apical cell membrane. In terms of biological role, functions as an ammonia transporter. The chain is Ammonium transporter Rh type C (rhcg) from Xenopus laevis (African clawed frog).